A 133-amino-acid chain; its full sequence is Small ribosomal subunit protein uS9 (133 aa).

The interval 111 to 133 (PRRSESKKFGGPGARARKQKSYR) is disordered.

Belongs to the universal ribosomal protein uS9 family.

The chain is Small ribosomal subunit protein uS9 from Methanosphaera stadtmanae (strain ATCC 43021 / DSM 3091 / JCM 11832 / MCB-3).